We begin with the raw amino-acid sequence, 313 residues long: WD repeat-containing protein 82 (313 aa).

6 WD repeats span residues 19–58, 105–144, 146–184, 192–231, 236–276, and 280–313; these read ENSD…PKRT, GHSK…CQGL, HLQG…KGPF, DRTC…VMHT, ANSK…KVAV, and KHTG…TIDD.

This sequence belongs to the WD repeat SWD2 family. As to quaternary structure, component of the SET1/COMPASS complex, at least composed of the catalytic subunit (SETD1A or SETD1B), WDR5, WDR82, RBBP5, ASH2L/ASH2, CXXC1/CFP1, HCFC1 and DPY30. Component of the PNUTS-PP1 phosphatase complex, composed of PPP1R10/PNUTS, TOX4, WDR82, and PPP1CA or PPP1CB or PPP1CC. Associated with multiple protein complexes including an RNA polymerase II complex, MLL3/MLL4 complex and a chaperonin-containing TCP1 complex. Interacts with SETD1B (via N-terminal region); the interaction is direct. Interacts with SETD1A (via N-terminal region); the interaction is direct. Interacts with CUL4B. Interacts with RBBP5. Interacts with POLR2B. Interacts with hyperphosphorylated C-terminal domain (CTD) of RNA polymerase II large subunit (POLR2A). Binds specifically to CTD heptad repeats phosphorylated on 'Ser-5' of each heptad. SETD1A enhances its interaction with POLR2A. Interacts with PPP1R10/PNUTS. Interacts with PPP1CA in the presence of PPP1R10/PNUTS. Interacts with ZC3H4; interaction is independent of the SET1 complex and promotes transcription termination of long non-coding RNAs (lncRNAs).

It localises to the nucleus. The protein resides in the chromosome. Its subcellular location is the cytoplasm. Functionally, regulatory component of the SET1/COMPASS complex implicated in the tethering of this complex to transcriptional start sites of active genes. Facilitates histone H3 'Lys-4' methylation (H3K4me) via recruitment of the SETD1A or SETD1B to the 'Ser-5' phosphorylated C-terminal domain (CTD) of RNA polymerase II large subunit (POLR2A). Component of the PNUTS-PP1 protein phosphatase complex, a protein phosphatase 1 (PP1) complex that promotes RNA polymerase II transcription pause-release, allowing transcription elongation. PNUTS-PP1 also plays a role in the control of chromatin structure and cell cycle progression during the transition from mitosis into interphase. Together with ZC3H4, but independently of the SET1 complex, part of a transcription termination checkpoint that promotes transcription termination of long non-coding RNAs (lncRNAs). The transcription termination checkpoint is activated by the inefficiently spliced first exon of lncRNAs and promotes transcription termination of lncRNAs and their subsequent degradation by the exosome. The chain is WD repeat-containing protein 82 from Homo sapiens (Human).